Here is a 243-residue protein sequence, read N- to C-terminus: NAD-dependent protein deacetylase (243 aa).

Residues 1 to 243 (MKHDLETLKH…VSVVKSLMTE (243 aa)) form the Deacetylase sirtuin-type domain. Residues A24, F35, R36, Q105, I107, D108, and H123 each contribute to the NAD(+) site. F35 is a binding site for nicotinamide. I107 and D108 together coordinate nicotinamide. Residue H123 is the Proton acceptor of the active site. Residues C131, C134, C151, and C154 each coordinate Zn(2+). NAD(+) is bound by residues S192, S193, N215, and D232.

The protein belongs to the sirtuin family. Class U subfamily. Zn(2+) serves as cofactor.

Its subcellular location is the cytoplasm. The catalysed reaction is N(6)-acetyl-L-lysyl-[protein] + NAD(+) + H2O = 2''-O-acetyl-ADP-D-ribose + nicotinamide + L-lysyl-[protein]. Functionally, NAD-dependent protein deacetylase which modulates the activities of several enzymes which are inactive in their acetylated form. This is NAD-dependent protein deacetylase from Staphylococcus aureus (strain COL).